The following is a 382-amino-acid chain: Lipid-A-disaccharide synthase (382 aa).

Belongs to the LpxB family.

The catalysed reaction is a lipid X + a UDP-2-N,3-O-bis[(3R)-3-hydroxyacyl]-alpha-D-glucosamine = a lipid A disaccharide + UDP + H(+). Its pathway is bacterial outer membrane biogenesis; LPS lipid A biosynthesis. Its function is as follows. Condensation of UDP-2,3-diacylglucosamine and 2,3-diacylglucosamine-1-phosphate to form lipid A disaccharide, a precursor of lipid A, a phosphorylated glycolipid that anchors the lipopolysaccharide to the outer membrane of the cell. This is Lipid-A-disaccharide synthase from Koribacter versatilis (strain Ellin345).